The following is a 618-amino-acid chain: Chaperone protein DnaK (618 aa).

Position 175 is a phosphothreonine; by autocatalysis (Thr-175). Residues 576–618 (SQNAEPGADGGANSGANPGGTTGNTDTKDDNVVDAEYKVDDDK) form a disordered region. Positions 583 to 597 (ADGGANSGANPGGTT) are enriched in gly residues. The segment covering 601 to 618 (DTKDDNVVDAEYKVDDDK) has biased composition (basic and acidic residues).

The protein belongs to the heat shock protein 70 family.

In terms of biological role, acts as a chaperone. This is Chaperone protein DnaK from Clostridium kluyveri (strain NBRC 12016).